Consider the following 495-residue polypeptide: MRKYSPLMVQGTTSDAGKTVLVAGLCRLLANKGIQVAPFKPQNMALNSAVTEDGGEIGRAQALQADAARVKPHVHMNPILLKPNTDIGAQVIVQGKAIETMDAWGFHDYKKLAMPYVLESFSYLSNNYECVVIEGAGSPAEINLRENDIANMGFAEAADVPVIIVADIDRGGVFAHLYGTLALLSESEQARVKGFVINRFRGDISLLVPGLEWLEEKTGKPVLGVIPYLHGLNLEAEDAIKSEQLDKGKFIVKVPVVTRISNHTDFDPLRLHPEIDLQFIGKGDSLSGADFIILPGSKSVQADLEYIKSQGWDKDIERHLRYGGKVMGICGGYQMLGEHLADPLGIEGVPCRVKGLGYLSISTELQKQKQLTLVEGTLALPNQNAVKVKGYEIHAGVSTNLGKEHIPISIHTKDAMRYDGTINDENSIFGTYLHGVFDEPEAFEAILTWAGLEKCQAINMHDIQEEAIERIAKSMEDSLDLSLIWPDVFEKNKAY.

The GATase cobBQ-type domain maps to 249–442 (KFIVKVPVVT…LHGVFDEPEA (194 aa)). The Nucleophile role is filled by Cys330. His434 is an active-site residue.

This sequence belongs to the CobB/CobQ family. CobQ subfamily.

The protein operates within cofactor biosynthesis; adenosylcobalamin biosynthesis. Catalyzes amidations at positions B, D, E, and G on adenosylcobyrinic A,C-diamide. NH(2) groups are provided by glutamine, and one molecule of ATP is hydrogenolyzed for each amidation. The protein is Cobyric acid synthase of Aliivibrio fischeri (strain ATCC 700601 / ES114) (Vibrio fischeri).